The chain runs to 356 residues: Cdc42 effector protein 4 (356 aa).

An N6-methyllysine modification is found at Lys-5. Ser-18 is modified (phosphoserine). Residues Ile-27–Gly-41 form the CRIB domain. The interval Ser-51–Met-102 is disordered. Ser-64 bears the Phosphoserine mark. The segment covering Leu-78 to Lys-87 has biased composition (basic residues). Ser-105, Ser-109, and Ser-118 each carry phosphoserine. Disordered stretches follow at residues Leu-122–Gln-182 and Val-257–Val-356. Positions Asn-123–Thr-132 are enriched in basic and acidic residues. A compositionally biased stretch (low complexity) spans Ser-133–Pro-143. Residues Ser-138, Ser-140, Ser-142, Ser-174, Ser-292, and Ser-295 each carry the phosphoserine modification. Residues Ala-287–Ser-315 show a composition bias toward low complexity. Residues Leu-318–Ser-344 are compositionally biased toward basic and acidic residues. Residues Phe-345 to Val-356 are compositionally biased toward acidic residues.

It belongs to the BORG/CEP family. In terms of assembly, interacts with CDC42 and RHOQ, in a GTP-dependent manner. As to expression, not detected in any of the adult tissues tested. May be expressed only in fetal or embryonic tissues.

It is found in the endomembrane system. The protein resides in the cytoplasm. The protein localises to the cytoskeleton. In terms of biological role, probably involved in the organization of the actin cytoskeleton. May act downstream of CDC42 to induce actin filament assembly leading to cell shape changes. Induces pseudopodia formation, when overexpressed in fibroblasts. In Homo sapiens (Human), this protein is Cdc42 effector protein 4 (CDC42EP4).